A 213-amino-acid polypeptide reads, in one-letter code: UPF0502 protein Daro_2469 (213 aa).

This sequence belongs to the UPF0502 family.

The sequence is that of UPF0502 protein Daro_2469 from Dechloromonas aromatica (strain RCB).